The following is a 558-amino-acid chain: MSYKSDIEIARAANKLPIQEIGAKLGMKNDDLLPYGHDKAKVSQEFINSVQGNEDGKLVLVTAINPTPAGEGKTTTTVGLGDGLNRIGKNAMICIREASLGPNFGMKGGAAGGGMAQVVPMEEMNLHFTGDFHAITSAHSLLSAMIDNHIYWGNEQEIDIRRVAWRRVVDMNDRALRQITASLGGVSNGFPRETGFDITVASEVMAILCLANDLKDLEKRLGDIIVAYRRDKTPVYCRDIKAEGAMTVLLKDAMQPNLVQTLENNPAFVHGGPFANIAHGCNSVIATKTALKVADYVVTEAGFGADLGAEKFMNIKCRKAGIAPSAVVVVATVRAMKMNGGVAKADLGAENVEAVKNGCANLGRHIENVKSFGVPAVVAINHFVTDTDAEINAVKEYVASHGVEAILSRHWELGSEGSAPLAEKVVELVEGGGANFGPLYPDEMPLFEKIETIAKRIYRADEVLADAKIRNQLKEWEEAGYGHLPVCMAKTQYSFSTDPNLRGAPTGHSVPVREVRLSAGAGFIVVVCGEIMTMPGLPRTPAAESICLNEEGLIEGLF.

67-74 (TPAGEGKT) contacts ATP.

Belongs to the formate--tetrahydrofolate ligase family.

It catalyses the reaction (6S)-5,6,7,8-tetrahydrofolate + formate + ATP = (6R)-10-formyltetrahydrofolate + ADP + phosphate. It participates in one-carbon metabolism; tetrahydrofolate interconversion. This is Formate--tetrahydrofolate ligase from Ruegeria sp. (strain TM1040) (Silicibacter sp.).